Reading from the N-terminus, the 155-residue chain is Endoribonuclease YbeY (155 aa).

3 residues coordinate Zn(2+): His-114, His-118, and His-124.

Belongs to the endoribonuclease YbeY family. The cofactor is Zn(2+).

The protein localises to the cytoplasm. Its function is as follows. Single strand-specific metallo-endoribonuclease involved in late-stage 70S ribosome quality control and in maturation of the 3' terminus of the 16S rRNA. The chain is Endoribonuclease YbeY from Shigella dysenteriae serotype 1 (strain Sd197).